The primary structure comprises 429 residues: Glutamate-1-semialdehyde 2,1-aminomutase 2 (429 aa).

At K268 the chain carries N6-(pyridoxal phosphate)lysine.

The protein belongs to the class-III pyridoxal-phosphate-dependent aminotransferase family. HemL subfamily. As to quaternary structure, homodimer. It depends on pyridoxal 5'-phosphate as a cofactor.

The protein resides in the cytoplasm. It catalyses the reaction (S)-4-amino-5-oxopentanoate = 5-aminolevulinate. It functions in the pathway porphyrin-containing compound metabolism; protoporphyrin-IX biosynthesis; 5-aminolevulinate from L-glutamyl-tRNA(Glu): step 2/2. This chain is Glutamate-1-semialdehyde 2,1-aminomutase 2, found in Geobacillus kaustophilus (strain HTA426).